The chain runs to 591 residues: Probable indole-3-acetic acid-amido synthetase GH3.11 (591 aa).

The protein belongs to the IAA-amido conjugating enzyme family. Expressed in etiolated and green seedlings, roots, callus and highly in flowers.

Its function is as follows. May catalyze the synthesis of indole-3-acetic acid (IAA)-amino acid conjugates, providing a mechanism for the plant to cope with the presence of excess auxin. The polypeptide is Probable indole-3-acetic acid-amido synthetase GH3.11 (GH3.11) (Oryza sativa subsp. japonica (Rice)).